The following is a 182-amino-acid chain: Flightin (182 aa).

Residues 1–15 (MADEEDPWGFDDGGE) show a composition bias toward acidic residues. Residues 1 to 76 (MADEEDPWGF…PPPPEDDGYR (76 aa)) are disordered.

Several forms of flightin are thought to be produced through post-translational modifications, possibly by phosphorylation. In terms of tissue distribution, found only in indirect flight muscles (IFM).

Possibly involved in the regulation of flight muscles contraction, possibly by modulating actin-myosin interaction. The protein is Flightin (fln) of Drosophila melanogaster (Fruit fly).